Consider the following 147-residue polypeptide: Cytochrome b-c1 complex subunit 6, mitochondrial (147 aa).

The tract at residues 25–89 is disordered; sequence AEDDDNEQHE…DLREHFKNTE (65 aa). The span at 41–78 shows a compositional bias: acidic residues; that stretch reads EEKEEENGDEDEDEDEDEDDDDDDDEDEEEEEEVTDQL. Positions 79 to 89 are enriched in basic and acidic residues; that stretch reads EDLREHFKNTE. A disulfide bond links cysteine 101 and cysteine 123.

Belongs to the UQCRH/QCR6 family. As to quaternary structure, component of the ubiquinol-cytochrome c oxidoreductase (cytochrome b-c1 complex, complex III, CIII), a multisubunit enzyme composed of 10 subunits. The complex is composed of 3 respiratory subunits cytochrome b (COB), cytochrome c1 (CYT1) and Rieske protein (RIP1), 2 core protein subunits COR1 and QCR2, and 5 low-molecular weight protein subunits QCR6, QCR7, QCR8, QCR9 and QCR10. The complex exists as an obligatory dimer and forms supercomplexes (SCs) in the inner mitochondrial membrane with a monomer or a dimer of cytochrome c oxidase (complex IV, CIV), resulting in 2 different assemblies (supercomplexes III(2)IV and III(2)IV(2)). QCR6 interacts with COX5A at the CIII-CIV interface.

Its subcellular location is the mitochondrion inner membrane. Functionally, component of the ubiquinol-cytochrome c oxidoreductase, a multisubunit transmembrane complex that is part of the mitochondrial electron transport chain which drives oxidative phosphorylation. The respiratory chain contains 3 multisubunit complexes succinate dehydrogenase (complex II, CII), ubiquinol-cytochrome c oxidoreductase (cytochrome b-c1 complex, complex III, CIII) and cytochrome c oxidase (complex IV, CIV), that cooperate to transfer electrons derived from NADH and succinate to molecular oxygen, creating an electrochemical gradient over the inner membrane that drives transmembrane transport and the ATP synthase. The cytochrome b-c1 complex catalyzes electron transfer from ubiquinol to cytochrome c, linking this redox reaction to translocation of protons across the mitochondrial inner membrane, with protons being carried across the membrane as hydrogens on the quinol. In the process called Q cycle, 2 protons are consumed from the matrix, 4 protons are released into the intermembrane space and 2 electrons are passed to cytochrome c. The chain is Cytochrome b-c1 complex subunit 6, mitochondrial (QCR6) from Saccharomyces cerevisiae (strain ATCC 204508 / S288c) (Baker's yeast).